The primary structure comprises 327 residues: Complex I intermediate-associated protein 30, mitochondrial (327 aa).

Residues 1-24 (MALVHKLLRGTYFLRKFXKPTSAL) constitute a mitochondrion transit peptide. The segment at 42 to 63 (PVASPGKASSQRKTEGDLQGDH) is disordered. The segment covering 53–63 (RKTEGDLQGDH) has biased composition (basic and acidic residues). Ser318 is modified (phosphoserine).

Belongs to the CIA30 family. In terms of assembly, part of the mitochondrial complex I assembly/MCIA complex that comprises at least the core subunits TMEM126B, NDUFAF1, ECSIT and ACAD9 and complement subunits such as COA1 and TMEM186. Interacts with ECSIT. Interacts with ACAD9. At early stages of complex I assembly, it is found in intermediate subcomplexes that contain different subunits including NDUFB6, NDUFA6, NDUFA9, NDUFS3, NDUFS7, ND1, ND2 and ND3. Interacts with TMEM70 and TMEM242.

It is found in the mitochondrion. The protein resides in the mitochondrion matrix. In terms of biological role, as part of the MCIA complex, involved in the assembly of the mitochondrial complex I. In Pan troglodytes (Chimpanzee), this protein is Complex I intermediate-associated protein 30, mitochondrial.